Consider the following 515-residue polypeptide: Histidine ammonia-lyase (515 aa).

The segment at residues 142 to 144 (ASG) is a cross-link (5-imidazolinone (Ala-Gly)). Ser-143 carries the post-translational modification 2,3-didehydroalanine (Ser).

It belongs to the PAL/histidase family. Post-translationally, contains an active site 4-methylidene-imidazol-5-one (MIO), which is formed autocatalytically by cyclization and dehydration of residues Ala-Ser-Gly.

It is found in the cytoplasm. It catalyses the reaction L-histidine = trans-urocanate + NH4(+). Its pathway is amino-acid degradation; L-histidine degradation into L-glutamate; N-formimidoyl-L-glutamate from L-histidine: step 1/3. This chain is Histidine ammonia-lyase, found in Methylobacterium nodulans (strain LMG 21967 / CNCM I-2342 / ORS 2060).